Consider the following 252-residue polypeptide: Thiazole synthase (252 aa).

Lysine 98 (schiff-base intermediate with DXP) is an active-site residue. 1-deoxy-D-xylulose 5-phosphate is bound by residues glycine 159, 185 to 186 (AG), and 207 to 208 (AS).

The protein belongs to the ThiG family. As to quaternary structure, homotetramer. Forms heterodimers with either ThiH or ThiS.

Its subcellular location is the cytoplasm. It catalyses the reaction [ThiS sulfur-carrier protein]-C-terminal-Gly-aminoethanethioate + 2-iminoacetate + 1-deoxy-D-xylulose 5-phosphate = [ThiS sulfur-carrier protein]-C-terminal Gly-Gly + 2-[(2R,5Z)-2-carboxy-4-methylthiazol-5(2H)-ylidene]ethyl phosphate + 2 H2O + H(+). It participates in cofactor biosynthesis; thiamine diphosphate biosynthesis. Functionally, catalyzes the rearrangement of 1-deoxy-D-xylulose 5-phosphate (DXP) to produce the thiazole phosphate moiety of thiamine. Sulfur is provided by the thiocarboxylate moiety of the carrier protein ThiS. In vitro, sulfur can be provided by H(2)S. The sequence is that of Thiazole synthase from Mycobacterium tuberculosis (strain ATCC 25177 / H37Ra).